Consider the following 398-residue polypeptide: Aldo-keto reductase ausK (398 aa).

Aspartate 76 lines the NADP(+) pocket. Tyrosine 81 acts as the Proton donor in catalysis. Residue histidine 156 coordinates substrate. Residues 186 to 187, glutamine 212, 241 to 251, and 317 to 325 each bind NADP(+); these read CN, DALGSGKFQSR, and RKIQHLHDN.

The protein belongs to the aldo/keto reductase family. Aldo/keto reductase 2 subfamily. In terms of assembly, homodimer.

It participates in secondary metabolite biosynthesis; terpenoid biosynthesis. Functionally, aldo-keto reductase; part of the gene cluster B that mediates the biosynthesis of austinol and dehydroaustinol, two fungal meroterpenoids. The first step of the pathway is the synthesis of 3,5-dimethylorsellinic acid by the polyketide synthase ausA. 3,5-dimethylorsellinic acid is then prenylated by the polyprenyl transferase ausN. Further epoxidation by the FAD-dependent monooxygenase ausM and cyclization by the probable terpene cyclase ausL lead to the formation of protoaustinoid A. Protoaustinoid A is then oxidized to spiro-lactone preaustinoid A3 by the combined action of the FAD-binding monooxygenases ausB and ausC, and the dioxygenase ausE. Acid-catalyzed keto-rearrangement and ring contraction of the tetraketide portion of preaustinoid A3 by ausJ lead to the formation of preaustinoid A4. The aldo-keto reductase ausK, with the help of ausH, is involved in the next step by transforming preaustinoid A4 into isoaustinone which is in turn hydroxylated by the P450 monooxygenase ausI to form austinolide. Finally, the cytochrome P450 monooxygenase ausG modifies austinolide to austinol. Austinol can be further modified to dehydroaustinol which forms a diffusible complex with diorcinol that initiates conidiation. Due to genetic rearrangements of the clusters and the subsequent loss of some enzymes, the end products of the Emericella nidulans austinoid biosynthesis clusters are austinol and dehydroaustinol, even if additional enzymes, such as the O-acetyltransferase ausQ and the cytochrome P450 monooxygenase ausR are still functional. This is Aldo-keto reductase ausK from Emericella nidulans (strain FGSC A4 / ATCC 38163 / CBS 112.46 / NRRL 194 / M139) (Aspergillus nidulans).